The sequence spans 309 residues: Homoserine O-succinyltransferase (309 aa).

The active-site Acyl-thioester intermediate is Cys-142. Lys-163 and Ser-192 together coordinate substrate. His-235 serves as the catalytic Proton acceptor. The active site involves Glu-237. Position 249 (Arg-249) interacts with substrate.

Belongs to the MetA family.

The protein resides in the cytoplasm. It catalyses the reaction L-homoserine + succinyl-CoA = O-succinyl-L-homoserine + CoA. Its pathway is amino-acid biosynthesis; L-methionine biosynthesis via de novo pathway; O-succinyl-L-homoserine from L-homoserine: step 1/1. In terms of biological role, transfers a succinyl group from succinyl-CoA to L-homoserine, forming succinyl-L-homoserine. The protein is Homoserine O-succinyltransferase of Citrobacter koseri (strain ATCC BAA-895 / CDC 4225-83 / SGSC4696).